A 373-amino-acid chain; its full sequence is Stationary phase protein 5 (373 aa).

In terms of biological role, required for survival at high temperature during stationary phase. In Saccharomyces cerevisiae (strain ATCC 204508 / S288c) (Baker's yeast), this protein is Stationary phase protein 5 (SPG5).